Consider the following 218-residue polypeptide: Small ribosomal subunit protein uS3 (218 aa).

The 70-residue stretch at 2-71 (SAPQRRLPVY…IGRKGAIVKE (70 aa)) folds into the KH type-2 domain.

The protein belongs to the universal ribosomal protein uS3 family. In terms of assembly, part of the 30S ribosomal subunit.

Its function is as follows. Binds the lower part of the 30S subunit head. This is Small ribosomal subunit protein uS3 from Pyrobaculum aerophilum (strain ATCC 51768 / DSM 7523 / JCM 9630 / CIP 104966 / NBRC 100827 / IM2).